The primary structure comprises 65 residues: DNA-directed RNA polymerase subunit omega (65 aa).

It belongs to the RNA polymerase subunit omega family. In terms of assembly, the RNAP catalytic core consists of 2 alpha, 1 beta, 1 beta' and 1 omega subunit. When a sigma factor is associated with the core the holoenzyme is formed, which can initiate transcription.

The enzyme catalyses RNA(n) + a ribonucleoside 5'-triphosphate = RNA(n+1) + diphosphate. Its function is as follows. Promotes RNA polymerase assembly. Latches the N- and C-terminal regions of the beta' subunit thereby facilitating its interaction with the beta and alpha subunits. In Baumannia cicadellinicola subsp. Homalodisca coagulata, this protein is DNA-directed RNA polymerase subunit omega.